A 393-amino-acid polypeptide reads, in one-letter code: Riboflavin biosynthesis protein RibBA (393 aa).

Positions 1–200 (MQFDTIELAI…IKSLVAFRKA (200 aa)) are DHBP synthase. D-ribulose 5-phosphate is bound by residues 27 to 28 (RE), Asp32, 139 to 143 (RNGHT), and Glu163. Residue Glu28 coordinates Mg(2+). Residue His142 coordinates Mg(2+). Residues 201 to 393 (VELNVNLKAK…TKKNKMGHLI (193 aa)) are GTP cyclohydrolase II. Residue 249–253 (RMHSA) participates in GTP binding. Zn(2+) contacts are provided by Cys254, Cys265, and Cys267. Residues Gln270, 291–293 (EGR), and Thr313 contribute to the GTP site. Asp325 functions as the Proton acceptor; for GTP cyclohydrolase activity in the catalytic mechanism. Arg327 functions as the Nucleophile; for GTP cyclohydrolase activity in the catalytic mechanism. GTP contacts are provided by Ser348 and Lys353.

This sequence in the N-terminal section; belongs to the DHBP synthase family. In the C-terminal section; belongs to the GTP cyclohydrolase II family. Mg(2+) is required as a cofactor. Requires Mn(2+) as cofactor. Zn(2+) serves as cofactor.

The enzyme catalyses D-ribulose 5-phosphate = (2S)-2-hydroxy-3-oxobutyl phosphate + formate + H(+). It catalyses the reaction GTP + 4 H2O = 2,5-diamino-6-hydroxy-4-(5-phosphoribosylamino)-pyrimidine + formate + 2 phosphate + 3 H(+). Its pathway is cofactor biosynthesis; riboflavin biosynthesis; 2-hydroxy-3-oxobutyl phosphate from D-ribulose 5-phosphate: step 1/1. The protein operates within cofactor biosynthesis; riboflavin biosynthesis; 5-amino-6-(D-ribitylamino)uracil from GTP: step 1/4. Catalyzes the conversion of D-ribulose 5-phosphate to formate and 3,4-dihydroxy-2-butanone 4-phosphate. Its function is as follows. Catalyzes the conversion of GTP to 2,5-diamino-6-ribosylamino-4(3H)-pyrimidinone 5'-phosphate (DARP), formate and pyrophosphate. In Staphylococcus epidermidis (strain ATCC 12228 / FDA PCI 1200), this protein is Riboflavin biosynthesis protein RibBA.